We begin with the raw amino-acid sequence, 136 residues long: MSGQTSFYCGLLLVLLIQAQARPRSDDSLQTLSRLLEDEYGHYLPSDELNNEAQEMSPAASLPEFNADQSDLELPWDRESREIGGRPFRQEAVLARLLKDLSNNPLRFRGRSKKGPSRGCFGVKLDRIGAMSGLGC.

The N-terminal stretch at 1-21 is a signal peptide; sequence MSGQTSFYCGLLLVLLIQAQA. A disulfide bond links Cys-120 and Cys-136.

It belongs to the natriuretic peptide family. CNP-115 is differentially processed to produce CNP-38 and CNP-39 in the heart and CNP-22 in the brain.

The protein resides in the secreted. Functionally, hormone which may be vasoactive and natriuretic. Has a cGMP-stimulating activity. This is C-type natriuretic peptide prohormone from Triakis scyllium (Banded houndshark).